Reading from the N-terminus, the 210-residue chain is Thymidylate kinase (210 aa).

10–17 provides a ligand contact to ATP; sequence GPEGAGKS.

It belongs to the thymidylate kinase family.

It carries out the reaction dTMP + ATP = dTDP + ADP. Its function is as follows. Phosphorylation of dTMP to form dTDP in both de novo and salvage pathways of dTTP synthesis. The chain is Thymidylate kinase from Pseudomonas paraeruginosa (strain DSM 24068 / PA7) (Pseudomonas aeruginosa (strain PA7)).